Reading from the N-terminus, the 96-residue chain is Co-chaperonin GroES (96 aa).

It belongs to the GroES chaperonin family. Heptamer of 7 subunits arranged in a ring. Interacts with the chaperonin GroEL.

The protein localises to the cytoplasm. Together with the chaperonin GroEL, plays an essential role in assisting protein folding. The GroEL-GroES system forms a nano-cage that allows encapsulation of the non-native substrate proteins and provides a physical environment optimized to promote and accelerate protein folding. GroES binds to the apical surface of the GroEL ring, thereby capping the opening of the GroEL channel. This chain is Co-chaperonin GroES, found in Neisseria gonorrhoeae (strain ATCC 700825 / FA 1090).